Here is a 207-residue protein sequence, read N- to C-terminus: High frequency lysogenization protein HflD homolog (207 aa).

It belongs to the HflD family.

It is found in the cytoplasm. The protein resides in the cell inner membrane. The protein is High frequency lysogenization protein HflD homolog of Teredinibacter turnerae (strain ATCC 39867 / T7901).